A 453-amino-acid polypeptide reads, in one-letter code: Bis(5'-adenosyl)-triphosphatase ENPP4 (453 aa).

The N-terminal stretch at 1 to 18 (MKLLLMLLFSGLMTGCRG) is a signal peptide. Residues 19-407 (NSSSASPPKL…DQWCINLPEA (389 aa)) are Extracellular-facing. The Zn(2+) site is built by D34 and T70. T70 functions as the AMP-threonine intermediate in the catalytic mechanism. Substrate contacts are provided by N91 and Y154. A glycan (N-linked (GlcNAc...) asparagine) is linked at N166. Residues D189, H193, D237, and H238 each coordinate Zn(2+). Residue D189 coordinates substrate. A disulfide bond links C254 and C287. The N-linked (GlcNAc...) asparagine glycan is linked to N276. H336 contributes to the Zn(2+) binding site. An intrachain disulfide couples C394 to C401. The chain crosses the membrane as a helical span at residues 408–428 (IGIVIGALLVLTTLTCLIIIM). Topologically, residues 429–453 (QNRVSGPRPFSRLQLQEDDDDPLIG) are cytoplasmic.

Belongs to the nucleotide pyrophosphatase/phosphodiesterase family. Requires Zn(2+) as cofactor.

Its subcellular location is the cell membrane. The catalysed reaction is P(1),P(3)-bis(5'-adenosyl) triphosphate + H2O = AMP + ADP + 2 H(+). Hydrolyzes extracellular Ap3A into AMP and ADP, and Ap4A into AMP and ATP. Ap3A and Ap4A are diadenosine polyphosphates thought to induce proliferation of vascular smooth muscle cells. Acts as a procoagulant, mediating platelet aggregation at the site of nascent thrombus via release of ADP from Ap3A and activation of ADP receptors. This is Bis(5'-adenosyl)-triphosphatase ENPP4 (ENPP4) from Bos taurus (Bovine).